The chain runs to 902 residues: 4-hydroxyphenylacetate decarboxylase glycyl radical subunit (902 aa).

One can recognise a PFL domain in the interval 38-774 (KRAEDLLDVY…ATLATPDGRL (737 aa)). The 4-hydroxyphenylacetate site is built by Ser-348 and Cys-507. Cys-507 (cysteine radical intermediate) is an active-site residue. Glu-509 acts as the Proton donor in catalysis. The 4-hydroxyphenylacetate site is built by His-540 and Glu-641. Residues 782–902 (GSVSAYAGTD…VIARTEYEGV (121 aa)) enclose the Glycine radical domain. Gly-877 bears the Glycine radical mark.

The protein belongs to the glycyl radical enzyme (GRE) family. HPAD subfamily. As to quaternary structure, heterooctamer consisting of 4 large (HpdB) subunits and 4 small (HpdC) subunits. Also forms a catalytically inactive homodimer. Post-translationally, phosphorylated on serine. Phosphorylation may trigger the formation of the active heterooctamers and thereby regulates enzyme activity. Requires the activating protein HpdA to generate the key active site glycyl radical that is involved in catalysis.

The catalysed reaction is 4-hydroxyphenylacetate + H(+) = 4-methylphenol + CO2. The enzyme catalyses 3,4-dihydroxyphenylacetate + H(+) = 4-methylcatechol + CO2. It carries out the reaction 2-hydroxy-2-(4-hydroxyphenyl)acetate + H(+) = 4-hydroxybenzyl alcohol + CO2. Enzyme activity catalyzed by the HPA decarboxylase complex is rapidly and irreversibly inactivated by oxygen. Competitively inhibited by p-hydroxyphenylacetamide. Not inhibited by m- or o-hydroxyphenyl-acetate, p-hydroxybenzoate or p-hydroxyphenylpropionate. In terms of biological role, glycyl radical subunit of the HPA decarboxylase that decarboxylates phenylacetates with a hydroxyl group in the p-position. Active toward 4-hydroxyphenylacetate, 3,4-dihydroxyphenylacetate and to a lesser extent p-hydroxymandelate (2-hydroxy-2-(4-hydroxyphenyl)acetate), forming 4-methylphenol, 4-methylcatechol and 4-hydroxybenzylalcohol, respectively. Is likely involved in the catabolism of aromatic amino acids such as tyrosine fermentation. 4-methylphenol (p-cresol) formation provides metabolic toxicity, which may benefit the pathogen C.difficile by suppression of the endogenous gastrointestinal microflora, allowing the development of gastrointestinal infections. The large subunit is the catalytic subunit that binds the substrate. The polypeptide is 4-hydroxyphenylacetate decarboxylase glycyl radical subunit (Clostridioides difficile (Peptoclostridium difficile)).